Reading from the N-terminus, the 163-residue chain is Large ribosomal subunit protein bL17 (163 aa).

A compositionally biased stretch (low complexity) spans 123 to 135 (AEASRATRASASK). The disordered stretch occupies residues 123-163 (AEASRATRASASKKAAEEAETEEVVEAPAEETATEEAAEEK). Residues 140–163 (EAETEEVVEAPAEETATEEAAEEK) are compositionally biased toward acidic residues.

Belongs to the bacterial ribosomal protein bL17 family. As to quaternary structure, part of the 50S ribosomal subunit. Contacts protein L32.

This is Large ribosomal subunit protein bL17 from Corynebacterium glutamicum (strain ATCC 13032 / DSM 20300 / JCM 1318 / BCRC 11384 / CCUG 27702 / LMG 3730 / NBRC 12168 / NCIMB 10025 / NRRL B-2784 / 534).